Reading from the N-terminus, the 71-residue chain is Alpha-elapitoxin-Nn3a (71 aa).

5 disulfides stabilise this stretch: C3–C20, C14–C42, C26–C30, C46–C56, and C57–C62.

This sequence belongs to the three-finger toxin family. Long-chain subfamily. Type II alpha-neurotoxin sub-subfamily. As to expression, expressed by the venom gland.

The protein resides in the secreted. In terms of biological role, nicotinic acetylcholine receptor antagonist. Binds to muscle nicotinic acetylcholine receptor (nAChR) and inhibits acetylcholine from binding to the receptor, thereby impairing neuromuscular transmission. Produces peripheral paralysis by blocking neuromuscular transmission at the postsynaptic site. Induces concentration-dependent inhibition of indirect twitches and abolishes contractile responses of tissues to exogenous acetylcholine and carbachol, in the chick biventer cervicis nerve-muscle preparation at 100-300 nM (in vitro). Prior incubation of tissues with Indian polyvalent antivenom (1 ml/0.6 mg) prevents the neurotoxic effects at 100 nM (in vitro). Addition of Indian polyvalent antivenom (1 ml/0.6 mg) at the t90 time point partially restores the neurotoxic effects (in vitro). Displays a reversible antagonism of concentration-response curves to carbachol, with a pA2 of 8.17 (in vitro). The protein is Alpha-elapitoxin-Nn3a of Naja naja (Indian cobra).